Here is a 2168-residue protein sequence, read N- to C-terminus: Bromodomain adjacent to zinc finger domain protein 2B (2168 aa).

8 disordered regions span residues 1 to 29 (MESG…ASVV), 140 to 348 (FAPP…KQPQ), 409 to 428 (LKAG…SELR), 459 to 479 (SNPK…ENNH), 528 to 698 (STPF…LHIA), 719 to 740 (GTSS…RRVT), 841 to 872 (MEGR…PPNV), and 1021 to 1043 (RKKA…LNKE). A compositionally biased stretch (low complexity) spans 8–29 (PSSAASSTTPTSSSTPSVASVV). Polar residues-rich tracts occupy residues 146 to 163 (NHDS…SNRN) and 171 to 193 (GSIN…STTA). 2 stretches are compositionally biased toward low complexity: residues 194–204 (SSSMGQTKSTS) and 240–263 (ESSS…ISSS). Positions 264–291 (DSDDLEEDEEEEDQSIEESEDDDSDSES) are enriched in acidic residues. A compositionally biased stretch (basic and acidic residues) spans 307–325 (SDPKADGQKATEKAQEKRI). Residues 335–348 (SQTHSFQSQQKQPQ) show a composition bias toward low complexity. Polar residues-rich tracts occupy residues 461-479 (PKAT…ENNH) and 528-551 (STPF…QTPV). The segment covering 592–605 (RGTDSDIPSSKDSE) has biased composition (basic and acidic residues). The segment covering 606 to 663 (DSNEDEEEDDEEEDEEDDEDDESDDSQSESDSNSESDTEGSEEEDDDDKDQDESDSDT) has biased composition (acidic residues). Residues 670-693 (MKLNKTTSSVKSPSMSLTGHSTPR) show a composition bias toward polar residues. Over residues 720–732 (TSSSTLTSSPHSG) the composition is skewed to low complexity. In terms of domain architecture, MBD spans 739-810 (VTDERELRIP…DNFSFSAKIR (72 aa)). A compositionally biased stretch (basic and acidic residues) spans 841-861 (MEGRRGRPPNPDRQRAREESR). Residues 883-1061 (AKLLRKLQAQ…ELEMAKELKK (179 aa)) are a coiled coil. The 66-residue stretch at 1087–1152 (GSTFSDCLMV…LSAAVCDPGL (66 aa)) folds into the DDT domain. Residues 1265-1341 (KRDTSGGIDL…CEDEDEGDQA (77 aa)) form a disordered region. Residues 1297 to 1321 (SDYDDDDDDDSDDQGDEDDEDEEDK) show a composition bias toward acidic residues. Residues 1322-1331 (EDKKGKKTDI) are compositionally biased toward basic and acidic residues. Positions 1334-1375 (DEDEGDQAASVEELEKQIEKLSKQQSQYRRKLFDASHSLRSV) form a coiled coil. Lysine 1425 participates in a covalent cross-link: Glycyl lysine isopeptide (Lys-Gly) (interchain with G-Cter in SUMO2). An N6-acetyllysine modification is found at lysine 1462. Serine 1465 and serine 1467 each carry phosphoserine. Residues 1503–1533 (SGKHSLGSVQSTATQSNVEKADSNNLFNTGS) are compositionally biased toward polar residues. 3 disordered regions span residues 1503–1542 (SGKH…FYSP), 1582–1607 (SLVT…SSAQ), and 1670–1694 (TSNV…AQPA). Residues 1588 to 1600 (SQPPSKSPSPTPA) are compositionally biased toward pro residues. Positions 1670 to 1692 (TSNVASSKSESPVPQNEKATSAQ) are enriched in polar residues. Serine 1680 is modified (phosphoserine). The PHD-type zinc-finger motif lies at 1931–1981 (KVYCQICRKGDNEELLLLCDGCDKGCHTYCHRPKITTIPDGDWFCPACIAK). A disordered region spans residues 1998–2040 (KTNESKKGKKVTLTGDTEDEDSASTSSSLKRGNKDLKKRKMEE). Residue threonine 2014 is modified to Phosphothreonine. The residue at position 2019 (serine 2019) is a Phosphoserine. Basic and acidic residues predominate over residues 2029-2040 (GNKDLKKRKMEE). The region spanning 2060 to 2164 (RDDSKDLALC…KYFEKKWTDT (105 aa)) is the Bromo domain.

Belongs to the WAL family. In terms of assembly, component of the BRF-1 ISWI chromatin remodeling complex, at least composed of SMARCA1 and BAZ2B, which regulates the spacing of histone octamers on the DNA template to facilitate access to DNA. Within the BRF-1 ISWI chromatin remodeling complex interacts with SMARCA1; the interaction is direct. Component of the BRF-5 ISWI chromatin remodeling complex, at least composed of SMARCA5/SNF2H and BAZ2B, which regulates the spacing of histone octamers on the DNA template to facilitate access to DNA. Within the BRF-5 ISWI chromatin remodeling complex interacts with SMARCA5/SNF2H; the interaction is direct. Interacts with acetylated lysine residues on histone H1.4, H2A, H2B, H3 and H4 (in vitro). Interacts with EHMT1. As to expression, expressed at varying levels in several tissues, whereas a smaller transcript was expressed specifically in testis.

The protein localises to the nucleus. Functionally, regulatory subunit of the ATP-dependent BRF-1 and BRF-5 ISWI chromatin remodeling complexes, which form ordered nucleosome arrays on chromatin and facilitate access to DNA during DNA-templated processes such as DNA replication, transcription, and repair. Both complexes regulate the spacing of nucleosomes along the chromatin and have the ability to slide mononucleosomes to the center of a DNA template. The BRF-1 ISWI chromatin remodeling complex has a lower ATP hydrolysis rate than the BRF-5 ISWI chromatin remodeling complex. Chromatin reader protein, which may play a role in transcriptional regulation via interaction with ISWI. Involved in positively modulating the rate of age-related behavioral deterioration. Represses the expression of mitochondrial function-related genes, perhaps by occupying their promoter regions, working in concert with histone methyltransferase EHMT1. In Homo sapiens (Human), this protein is Bromodomain adjacent to zinc finger domain protein 2B (BAZ2B).